The sequence spans 388 residues: Processive diacylglycerol beta-glucosyltransferase (388 aa).

This sequence belongs to the glycosyltransferase 28 family. UgtP subfamily.

It localises to the cell membrane. It catalyses the reaction a 1,2-diacyl-3-O-(beta-D-glucopyranosyl)-sn-glycerol + UDP-alpha-D-glucose = a 1,2-diacyl-3-O-(beta-D-Glc-(1-&gt;6)-beta-D-Glc)-sn-glycerol + UDP + H(+). It carries out the reaction a 1,2-diacyl-3-O-(beta-D-Glc-(1-&gt;6)-beta-D-Glc)-sn-glycerol + UDP-alpha-D-glucose = a 1,2-diacyl-3-O-(beta-D-Glc-(1-&gt;6)-beta-D-Glc-(1-&gt;6)-beta-D-Glc)-sn-glycerol + UDP + H(+). The catalysed reaction is a 1,2-diacyl-sn-glycerol + UDP-alpha-D-glucose = a 1,2-diacyl-3-O-(beta-D-glucopyranosyl)-sn-glycerol + UDP + H(+). Its pathway is glycolipid metabolism; diglucosyl-diacylglycerol biosynthesis. Functionally, processive glucosyltransferase involved in the biosynthesis of both the bilayer- and non-bilayer-forming membrane glucolipids. Is able to successively transfer up to three glucosyl residues to diacylglycerol (DAG), thereby catalyzing the formation of beta-monoglucosyl-DAG (3-O-(beta-D-glucopyranosyl)-1,2-diacyl-sn-glycerol), beta-diglucosyl-DAG (3-O-(beta-D-glucopyranosyl-beta-(1-&gt;6)-D-glucopyranosyl)-1,2-diacyl-sn-glycerol) and beta-triglucosyl-DAG (3-O-(beta-D-glucopyranosyl-beta-(1-&gt;6)-D-glucopyranosyl-beta-(1-&gt;6)-D-glucopyranosyl)-1,2-diacyl-sn-glycerol). Beta-diglucosyl-DAG is the predominant glycolipid found in Bacillales and is also used as a membrane anchor for lipoteichoic acid (LTA). This is Processive diacylglycerol beta-glucosyltransferase from Bacillus cereus (strain AH187).